We begin with the raw amino-acid sequence, 199 residues long: MEWKYVIPGIPDNFFERDEEIPMTKEEIRALALSKLRIRKGDMILDIGCGTGSVTVEASLLVGSTGKVYGVDKEEKAINLTRRNAEKFGVLNNIVLIKGEAPEILFTINEKFDRIFIGGGSEKIKEIISASWEIIKKGGRVVIDAILLETVNNAISAMENIGFINLEITEVIIAKGMKTKVGTAMMTRNPIFIISGEKQ.

S-adenosyl-L-methionine is bound by residues threonine 24, 48 to 52 (GCGTG), aspartate 72, and alanine 101.

The protein belongs to the methyltransferase superfamily. Archaeal-type CbiT family.

The enzyme catalyses Co-precorrin-6B + S-adenosyl-L-methionine = Co-precorrin-7 + S-adenosyl-L-homocysteine + CO2. Its pathway is cofactor biosynthesis; adenosylcobalamin biosynthesis; cob(II)yrinate a,c-diamide from sirohydrochlorin (anaerobic route): step 8/10. Functionally, catalyzes the methylation of C-15 in cobalt-precorrin-6B followed by the decarboxylation of C-12 to form cobalt-precorrin-7. The polypeptide is Probable cobalt-precorrin-6B C(15)-methyltransferase (decarboxylating) (Saccharolobus islandicus (strain Y.N.15.51 / Yellowstone #2) (Sulfolobus islandicus)).